The chain runs to 448 residues: Glutamyl-tRNA reductase (448 aa).

Substrate contacts are provided by residues 49 to 52 (TCNR), Ser-109, 114 to 116 (ETQ), and Gln-120. Residue Cys-50 is the Nucleophile of the active site. Residue 189 to 194 (GAGETG) coordinates NADP(+). The interval 427 to 448 (PVDEVEETDATSAKAPLRALMR) is disordered.

Belongs to the glutamyl-tRNA reductase family. Homodimer.

It catalyses the reaction (S)-4-amino-5-oxopentanoate + tRNA(Glu) + NADP(+) = L-glutamyl-tRNA(Glu) + NADPH + H(+). Its pathway is porphyrin-containing compound metabolism; protoporphyrin-IX biosynthesis; 5-aminolevulinate from L-glutamyl-tRNA(Glu): step 1/2. Functionally, catalyzes the NADPH-dependent reduction of glutamyl-tRNA(Glu) to glutamate 1-semialdehyde (GSA). The chain is Glutamyl-tRNA reductase from Exiguobacterium sp. (strain ATCC BAA-1283 / AT1b).